The primary structure comprises 94 residues: Bacterial microcompartment shell protein PduA (94 aa).

The BMC domain maps to 5–89 (ALGMVETKGL…PHTDVEKILP (85 aa)).

The protein belongs to the bacterial microcompartments protein family. In terms of assembly, homohexamer with a central pore of about 5.6 Angstroms in diameter. The hexamers pack against each other in arrays. Interacts with the N-terminus of PduP which targets PduP to the BMC. Modeling suggests PduC, PduD, PduE, PduL and PduP interact with a cleft formed by the C-terminal segments of 2 adjacent PduA subunits (on the BMC luminal side) in the hexamer.

The protein localises to the bacterial microcompartment. It participates in polyol metabolism; 1,2-propanediol degradation. One of the major shell proteins of the bacterial microcompartment (BMC) dedicated to 1,2-propanediol (1,2-PD) degradation. At least one of PduA or PduJ is required for BMC assembly; it must be encoded as the first gene in the pdu operon. Not required for structural integrity of BMCs, it is required to mitigate propionaldehyde toxicity. Controls diffusion of 1,2-PD into and propionaldehyde out of the BMC shell; residue 40 is particularly important for pore permeability. Overexpression of this protein leads to aberrant filaments that extend the length of the cell, cross the cleavage furrow and impair division. The filaments form nanotubes with a hollow center. The isolated BMC shell component protein ratio for J:A:B':B:K:T:U is approximately 15:10:7:6:1:1:2. Edge residues (particularly Lys-26) are important for function and assembly of the BMC, and influence array formation by hexamers. Interaction with PduA allows encapsulation of at least PduP in BMCs. Probably also targets PduD to the BMC. PduA is probably the hub for binding multiple enzymes to the interior of the BMC; modeling suggests PduC, PduD, PduE, PduG, PduL and PduP are targeted to PduA. Functionally, the 1,2-PD-specific bacterial microcompartment (BMC) concentrates low levels of 1,2-PD catabolic enzymes, concentrates volatile reaction intermediates thus enhancing pathway flux and keeps the level of toxic, mutagenic propionaldehyde low. The chain is Bacterial microcompartment shell protein PduA from Salmonella typhimurium (strain LT2 / SGSC1412 / ATCC 700720).